Reading from the N-terminus, the 379-residue chain is tRNA-specific 2-thiouridylase MnmA (379 aa).

Residues 9-16 (AMSGGVDS) and methionine 35 each bind ATP. The tract at residues 94–96 (NPD) is interaction with target base in tRNA. Cysteine 99 serves as the catalytic Nucleophile. A disulfide bridge connects residues cysteine 99 and cysteine 195. An ATP-binding site is contributed by glycine 123. The interaction with tRNA stretch occupies residues 145–147 (KDQ). Residue cysteine 195 is the Cysteine persulfide intermediate of the active site. Positions 307–308 (RY) are interaction with tRNA.

It belongs to the MnmA/TRMU family.

It localises to the cytoplasm. It carries out the reaction S-sulfanyl-L-cysteinyl-[protein] + uridine(34) in tRNA + AH2 + ATP = 2-thiouridine(34) in tRNA + L-cysteinyl-[protein] + A + AMP + diphosphate + H(+). Functionally, catalyzes the 2-thiolation of uridine at the wobble position (U34) of tRNA, leading to the formation of s(2)U34. In Xylella fastidiosa (strain 9a5c), this protein is tRNA-specific 2-thiouridylase MnmA.